A 313-amino-acid polypeptide reads, in one-letter code: Methionyl-tRNA formyltransferase (313 aa).

Residue Ser110–Pro113 participates in (6S)-5,6,7,8-tetrahydrofolate binding.

Belongs to the Fmt family.

It carries out the reaction L-methionyl-tRNA(fMet) + (6R)-10-formyltetrahydrofolate = N-formyl-L-methionyl-tRNA(fMet) + (6S)-5,6,7,8-tetrahydrofolate + H(+). In terms of biological role, attaches a formyl group to the free amino group of methionyl-tRNA(fMet). The formyl group appears to play a dual role in the initiator identity of N-formylmethionyl-tRNA by promoting its recognition by IF2 and preventing the misappropriation of this tRNA by the elongation apparatus. This chain is Methionyl-tRNA formyltransferase, found in Lysinibacillus sphaericus (strain C3-41).